The chain runs to 437 residues: 26S proteasome subunit RPT4 (437 aa).

The interval 1–51 is disordered; it reads MSEEQDPLLAGLGETSGDNHTQQSHEQQPEQPQETEEHHEEEPSRVDPEQE. Ser-2 bears the N-acetylserine mark. Low complexity predominate over residues 20–32; sequence HTQQSHEQQPEQP. A compositionally biased stretch (basic and acidic residues) spans 35–51; it reads TEEHHEEEPSRVDPEQE. An ATP-binding site is contributed by 222–229; that stretch reads GPPGTGKT.

Belongs to the AAA ATPase family. Post-translationally, N-acetylated by NAT1.

Its function is as follows. The 26S proteasome is involved in the ATP-dependent degradation of ubiquitinated proteins. The regulatory (or ATPase) complex confers ATP dependency and substrate specificity to the 26S complex. The protein is 26S proteasome subunit RPT4 (RPT4) of Saccharomyces cerevisiae (strain ATCC 204508 / S288c) (Baker's yeast).